Consider the following 252-residue polypeptide: Geranylgeranylglyceryl phosphate synthase (252 aa).

Residues Asp25 and Ser54 each coordinate Mg(2+). Sn-glycerol 1-phosphate-binding positions include 174-180 (FMDAGSG), 205-206 (GG), and 227-228 (GN).

Belongs to the GGGP/HepGP synthase family. Group II subfamily. As to quaternary structure, homohexamer. Requires Mg(2+) as cofactor.

The enzyme catalyses sn-glycerol 1-phosphate + (2E,6E,10E)-geranylgeranyl diphosphate = sn-3-O-(geranylgeranyl)glycerol 1-phosphate + diphosphate. Its function is as follows. Prenyltransferase that catalyzes the transfer of the geranylgeranyl moiety of geranylgeranyl diphosphate (GGPP) to the C3 hydroxyl of sn-glycerol-1-phosphate (G1P). The protein is Geranylgeranylglyceryl phosphate synthase of Chitinophaga pinensis (strain ATCC 43595 / DSM 2588 / LMG 13176 / NBRC 15968 / NCIMB 11800 / UQM 2034).